The primary structure comprises 257 residues: Neurotrophin-3 (257 aa).

A signal peptide spans 1 to 18; it reads MSILFYVIFLAYLRGIQG. A propeptide spanning residues 19–138 is cleaved from the precursor; it reads NNMDQRSLPE…VANRTSRRKR (120 aa). The interval 61–81 is disordered; that stretch reads STLPKAEAPREPERGGPAKSA. Residues 67–76 show a composition bias toward basic and acidic residues; it reads EAPREPERGG. An N-linked (GlcNAc...) asparagine glycan is attached at Asn-131. 3 disulfide bridges follow: Cys-152/Cys-217, Cys-195/Cys-246, and Cys-205/Cys-248.

This sequence belongs to the NGF-beta family. In terms of tissue distribution, brain and peripheral tissues.

It localises to the secreted. Seems to promote the survival of visceral and proprioceptive sensory neurons. In Homo sapiens (Human), this protein is Neurotrophin-3 (NTF3).